We begin with the raw amino-acid sequence, 158 residues long: RING-H2 finger protein ATL66 (158 aa).

Residues 33 to 53 (LFFALALFSVVLFFALLTLYI) form a helical membrane-spanning segment. The RING-type; atypical zinc-finger motif lies at 107–149 (CCICLGGFEEGEKMKVLPPCSHCYHCECVDRWLKTESSCPLCR).

This sequence belongs to the RING-type zinc finger family. ATL subfamily.

It localises to the membrane. The catalysed reaction is S-ubiquitinyl-[E2 ubiquitin-conjugating enzyme]-L-cysteine + [acceptor protein]-L-lysine = [E2 ubiquitin-conjugating enzyme]-L-cysteine + N(6)-ubiquitinyl-[acceptor protein]-L-lysine.. It participates in protein modification; protein ubiquitination. The sequence is that of RING-H2 finger protein ATL66 (ATL66) from Arabidopsis thaliana (Mouse-ear cress).